The primary structure comprises 262 residues: Nurim (262 aa).

Residues 1-4 (MAPA) lie on the Nuclear side of the membrane. A helical transmembrane segment spans residues 5–28 (LLLVPAALASFILAFGTGVEFVRF). Residues 29 to 58 (TSLRPLLGGIPESGGPDARHGWLAALQDRS) lie on the Perinuclear space side of the membrane. A helical transmembrane segment spans residues 59–80 (ILASLAWDLCLLLLFVVQHSLM). The Nuclear segment spans residues 81–97 (ATEAVKAWTSRYFGVLQ). The helical transmembrane segment at 98–114 (RSLYVACTALALQLVMR) threads the bilayer. Topologically, residues 115–133 (YWETTPRGPVLWEARAEPW) are perinuclear space. A helical transmembrane segment spans residues 134–164 (ATWVPLLCFVLHVVSWLLIFSILLVFDYAEL). Residues 165 to 191 (MGLKQVYYHVLGLGEPLSLKSPRALRL) are Nuclear-facing. The helical transmembrane segment at 192–210 (FSHLRHPVCVELLTVLWVV) threads the bilayer. Residues 211 to 216 (PTLGTD) are Perinuclear space-facing. Residues 217 to 234 (RLLLALLFTLYLGLAHGL) form a helical membrane-spanning segment. Topologically, residues 235–262 (DQQDLRYLRSQLQRKLHLLSRPQDGEAE) are nuclear.

Belongs to the nurim family.

The protein resides in the nucleus inner membrane. This Mus musculus (Mouse) protein is Nurim (Nrm).